A 204-amino-acid polypeptide reads, in one-letter code: Large ribosomal subunit protein eL15 (204 aa).

Belongs to the eukaryotic ribosomal protein eL15 family.

This Anopheles gambiae (African malaria mosquito) protein is Large ribosomal subunit protein eL15 (RpL15).